The following is a 352-amino-acid chain: Uroporphyrinogen decarboxylase (352 aa).

Substrate-binding positions include 27–31 (RQAGR), D77, Y154, T209, and H325.

The protein belongs to the uroporphyrinogen decarboxylase family. Homodimer.

It localises to the cytoplasm. The enzyme catalyses uroporphyrinogen III + 4 H(+) = coproporphyrinogen III + 4 CO2. The protein operates within porphyrin-containing compound metabolism; protoporphyrin-IX biosynthesis; coproporphyrinogen-III from 5-aminolevulinate: step 4/4. Its function is as follows. Catalyzes the decarboxylation of four acetate groups of uroporphyrinogen-III to yield coproporphyrinogen-III. The sequence is that of Uroporphyrinogen decarboxylase from Legionella pneumophila (strain Corby).